A 499-amino-acid polypeptide reads, in one-letter code: uncharacterized protein (499 aa).

The next 11 helical transmembrane spans lie at 5-25 (FLLV…YNAV), 79-99 (LGLR…TYLL), 110-130 (ALLS…ARYA), 132-152 (PEVP…EYFT), 170-190 (VLTK…FYLL), 203-223 (YAGT…QYLV), 252-272 (ALDI…ALFW), 286-306 (VWFS…PVYI), 332-352 (LSLI…SLYF), 354-374 (FSAT…LKKY), and 377-397 (LPAF…LPYV).

The protein belongs to the glycosyltransferase 39 family.

Its subcellular location is the cell membrane. This is an uncharacterized protein from Aquifex aeolicus (strain VF5).